The following is a 520-amino-acid chain: Cyclic GMP-AMP synthase-like receptor (520 aa).

Residues serine 68 and 80–82 contribute to the ATP site; that span reads EFD. Mg(2+) contacts are provided by glutamate 80, aspartate 82, and aspartate 198. Residue aspartate 198 coordinates GTP. Lysine 264 serves as a coordination point for ATP. The Mn(2+) site is built by leucine 288 and aspartate 294.

Belongs to the mab-21 family. The cofactor is Mg(2+). Mn(2+) serves as cofactor.

It catalyses the reaction GTP + ATP = 2',3'-cGAMP + 2 diphosphate. The catalysed reaction is GTP + ATP = pppGp(2'-5')A + diphosphate. The enzyme catalyses pppGp(2'-5')A = 2',3'-cGAMP + diphosphate. Nucleotidyltransferase that catalyzes the formation of cyclic GMP-AMP (2',3'-cGAMP) from ATP and GTP and plays a key role in innate immunity. Acts as a key sensor of double-stranded RNA (dsRNA), the presence of dsRNA in the cytoplasm being a danger signal that triggers the immune responses. Directly binds dsRNA, activating the nucleotidyltransferase activity, leading to synthesis of 2',3'-cGAMP, a second messenger that binds to and activates Sting, thereby triggering the immune response via activation of the NF-kappa-B transcription factor. The chain is Cyclic GMP-AMP synthase-like receptor from Microplitis demolitor (Parasitoid wasp).